A 502-amino-acid chain; its full sequence is Probable ADP-dependent glucokinase (502 aa).

The signal sequence occupies residues 1 to 32; the sequence is MFSETFVPSIFSYKHRLLHLSVLFFIVPYWYS. Positions 44–497 constitute an ADPK domain; it reads SVETAMFLSW…LLYSQFYRLN (454 aa). Residues Asn-89 and Asn-190 are each glycosylated (N-linked (GlcNAc...) asparagine). Mg(2+)-binding residues include Glu-290, Glu-320, and Asp-481. The active-site Proton acceptor is the Asp-481.

It belongs to the ADP-dependent glucokinase family. As to quaternary structure, monomer. Mg(2+) is required as a cofactor.

It is found in the secreted. It catalyses the reaction D-glucose + ADP = D-glucose 6-phosphate + AMP + H(+). It participates in carbohydrate degradation; glycolysis. In terms of biological role, catalyzes the phosphorylation of D-glucose to D-glucose 6-phosphate using ADP as the phosphate donor. GDP and CDP can replace ADP, but with reduced efficiency. The chain is Probable ADP-dependent glucokinase from Caenorhabditis elegans.